We begin with the raw amino-acid sequence, 310 residues long: Proline-rich 28 kDa antigen (310 aa).

A signal peptide spans 1-32; it reads MIQIARTWRVFAGGMATGFIGVVLVTAGKASA. A disordered region spans residues 278–310; sequence QAPAPAPGSAPVGLPGQAPGYPPAGTLTPVPPR.

The protein to M.leprae ML0031.

This Mycobacterium bovis (strain ATCC BAA-935 / AF2122/97) protein is Proline-rich 28 kDa antigen (mtc28).